We begin with the raw amino-acid sequence, 539 residues long: ATP synthase subunit beta (539 aa).

Residues 1–44 form a disordered region; it reads MAKTPAEKPATAAKKPAAPKAAAAPKAAAAKAPAAAKAPAAKKP. Residue 212–219 coordinates ATP; it reads GGAGVGKT.

It belongs to the ATPase alpha/beta chains family. F-type ATPases have 2 components, CF(1) - the catalytic core - and CF(0) - the membrane proton channel. CF(1) has five subunits: alpha(3), beta(3), gamma(1), delta(1), epsilon(1). CF(0) has three main subunits: a(1), b(2) and c(9-12). The alpha and beta chains form an alternating ring which encloses part of the gamma chain. CF(1) is attached to CF(0) by a central stalk formed by the gamma and epsilon chains, while a peripheral stalk is formed by the delta and b chains.

The protein resides in the cell inner membrane. It catalyses the reaction ATP + H2O + 4 H(+)(in) = ADP + phosphate + 5 H(+)(out). Produces ATP from ADP in the presence of a proton gradient across the membrane. The catalytic sites are hosted primarily by the beta subunits. This is ATP synthase subunit beta from Caulobacter vibrioides (strain ATCC 19089 / CIP 103742 / CB 15) (Caulobacter crescentus).